The following is a 409-amino-acid chain: Protein naked cuticle homolog 2 (409 aa).

Residue Gly-2 is the site of N-myristoyl glycine attachment. Positions Ala-109–Val-144 constitute an EF-hand domain. 5 residues coordinate Ca(2+): Asp-122, Asp-124, Ser-126, Lys-128, and Asp-133. Disordered regions lie at residues Leu-160–Asp-224, Thr-243–Gly-315, Ser-346–Ser-366, and Arg-388–Thr-409. 2 stretches are compositionally biased toward basic and acidic residues: residues Ala-171–Ser-185 and Val-193–Asp-224. Over residues Asp-247–Pro-268 the composition is skewed to low complexity. Basic residues predominate over residues His-389–Thr-409.

It belongs to the NKD family. In terms of tissue distribution, expressed ubiquitously until 1 dpf, when expression becomes confined to the anterior CNS, with slight expression in the developing tail.

Its subcellular location is the cell membrane. It localises to the cytoplasm. In terms of biological role, cell autonomous antagonist of both the canonical and non-canonical Wnt signaling pathways. In Danio rerio (Zebrafish), this protein is Protein naked cuticle homolog 2 (nkd2).